A 218-amino-acid chain; its full sequence is Ribose-5-phosphate isomerase A (218 aa).

Residues 28-31 (TGST), 81-84 (DGAD), and 94-97 (KGGG) each bind substrate. The active-site Proton acceptor is the glutamate 103. Lysine 121 is a binding site for substrate.

This sequence belongs to the ribose 5-phosphate isomerase family. As to quaternary structure, homodimer.

The catalysed reaction is aldehydo-D-ribose 5-phosphate = D-ribulose 5-phosphate. Its pathway is carbohydrate degradation; pentose phosphate pathway; D-ribose 5-phosphate from D-ribulose 5-phosphate (non-oxidative stage): step 1/1. Its function is as follows. Catalyzes the reversible conversion of ribose-5-phosphate to ribulose 5-phosphate. In Psychromonas ingrahamii (strain DSM 17664 / CCUG 51855 / 37), this protein is Ribose-5-phosphate isomerase A.